Here is a 571-residue protein sequence, read N- to C-terminus: Proline--tRNA ligase (571 aa).

The protein belongs to the class-II aminoacyl-tRNA synthetase family. ProS type 1 subfamily. As to quaternary structure, homodimer.

The protein resides in the cytoplasm. It carries out the reaction tRNA(Pro) + L-proline + ATP = L-prolyl-tRNA(Pro) + AMP + diphosphate. Functionally, catalyzes the attachment of proline to tRNA(Pro) in a two-step reaction: proline is first activated by ATP to form Pro-AMP and then transferred to the acceptor end of tRNA(Pro). As ProRS can inadvertently accommodate and process non-cognate amino acids such as alanine and cysteine, to avoid such errors it has two additional distinct editing activities against alanine. One activity is designated as 'pretransfer' editing and involves the tRNA(Pro)-independent hydrolysis of activated Ala-AMP. The other activity is designated 'posttransfer' editing and involves deacylation of mischarged Ala-tRNA(Pro). The misacylated Cys-tRNA(Pro) is not edited by ProRS. The sequence is that of Proline--tRNA ligase from Pseudomonas aeruginosa (strain LESB58).